Reading from the N-terminus, the 94-residue chain is Integration host factor subunit beta (94 aa).

It belongs to the bacterial histone-like protein family. Heterodimer of an alpha and a beta chain.

This protein is one of the two subunits of integration host factor, a specific DNA-binding protein that functions in genetic recombination as well as in transcriptional and translational control. This Serratia marcescens protein is Integration host factor subunit beta (ihfB).